The chain runs to 390 residues: Transforming growth factor beta-1 proprotein (390 aa).

The signal sequence occupies residues 1-29; that stretch reads MPPSGLRLLPLLLPLLWLLMLTPGRPVAG. Residues 30 to 74 are straightjacket domain; that stretch reads LSTCKTIDMELVKRKGIEAIRGQILSKLRLASPPSQGDVPPGPLP. The tract at residues 75-271 is arm domain; that stretch reads EAILALYNST…ATPLERAQHL (197 aa). Residues Asn-82, Asn-136, and Asn-176 are each glycosylated (N-linked (GlcNAc...) asparagine). A bowtie tail region spans residues 226–252; that stretch reads DSKDNTLQVDINGFSSGRRGDLATIHG. A Cell attachment site motif is present at residues 244–246; the sequence is RGD. 4 disulfides stabilise this stretch: Cys-285/Cys-294, Cys-293/Cys-356, Cys-322/Cys-387, and Cys-326/Cys-389.

This sequence belongs to the TGF-beta family. In terms of assembly, homodimer; disulfide-linked. Interacts with the serine proteases, HTRA1 and HTRA3: the interaction with either inhibits TGFB1-mediated signaling and the HTRA protease activity is required for this inhibition. May interact with THSD4; this interaction may lead to sequestration by FBN1 microfibril assembly and attenuation of TGFB signaling. Interacts with CD109, DPT and ASPN. Interacts with EFEMP2. Interacts with TSKU; the interaction contributes to regulation of the hair cycle. Interacts with TGFBR3. Homodimer; disulfide-linked. Interacts with transforming growth factor beta-1 (TGF-beta-1) chain; interaction is non-covalent and maintains TGF-beta-1 in a latent state; each latency-associated peptide (LAP) monomer interacts with TGF-beta-1 in the other monomer. Interacts with LTBP1; leading to regulation of TGF-beta-1 activation. Interacts with LRRC32/GARP; leading to regulation of TGF-beta-1 activation on the surface of activated regulatory T-cells (Tregs). Interacts with LRRC33/NRROS; leading to regulation of TGF-beta-1 activation in macrophages and microglia. Interacts (via cell attachment site) with integrins ITGAV and ITGB6 (ITGAV:ITGB6), leading to release of the active TGF-beta-1. Interacts with NREP; the interaction results in a decrease in TGFB1 autoinduction. Interacts with HSP90AB1; inhibits latent TGFB1 activation. As to quaternary structure, homodimer; disulfide-linked. Interacts with TGF-beta receptors (TGFBR1 and TGFBR2), leading to signal transduction. In terms of processing, transforming growth factor beta-1 proprotein: The precursor proprotein is cleaved in the Golgi apparatus by FURIN to form Transforming growth factor beta-1 (TGF-beta-1) and Latency-associated peptide (LAP) chains, which remain non-covalently linked, rendering TGF-beta-1 inactive. N-glycosylated. Deglycosylation leads to activation of Transforming growth factor beta-1 (TGF-beta-1); mechanisms triggering deglycosylation-driven activation of TGF-beta-1 are however unclear.

It is found in the secreted. The protein resides in the extracellular space. Its subcellular location is the extracellular matrix. Its function is as follows. Transforming growth factor beta-1 proprotein: Precursor of the Latency-associated peptide (LAP) and Transforming growth factor beta-1 (TGF-beta-1) chains, which constitute the regulatory and active subunit of TGF-beta-1, respectively. In terms of biological role, required to maintain the Transforming growth factor beta-1 (TGF-beta-1) chain in a latent state during storage in extracellular matrix. Associates non-covalently with TGF-beta-1 and regulates its activation via interaction with 'milieu molecules', such as LTBP1, LRRC32/GARP and LRRC33/NRROS, that control activation of TGF-beta-1. Interaction with LRRC33/NRROS regulates activation of TGF-beta-1 in macrophages and microglia. Interaction with LRRC32/GARP controls activation of TGF-beta-1 on the surface of activated regulatory T-cells (Tregs). Interaction with integrins (ITGAV:ITGB6 or ITGAV:ITGB8) results in distortion of the Latency-associated peptide chain and subsequent release of the active TGF-beta-1. Multifunctional protein that regulates the growth and differentiation of various cell types and is involved in various processes, such as normal development, immune function, microglia function and responses to neurodegeneration. Activation into mature form follows different steps: following cleavage of the proprotein in the Golgi apparatus, Latency-associated peptide (LAP) and Transforming growth factor beta-1 (TGF-beta-1) chains remain non-covalently linked rendering TGF-beta-1 inactive during storage in extracellular matrix. At the same time, LAP chain interacts with 'milieu molecules', such as LTBP1, LRRC32/GARP and LRRC33/NRROS that control activation of TGF-beta-1 and maintain it in a latent state during storage in extracellular milieus. TGF-beta-1 is released from LAP by integrins (ITGAV:ITGB6 or ITGAV:ITGB8): integrin-binding to LAP stabilizes an alternative conformation of the LAP bowtie tail and results in distortion of the LAP chain and subsequent release of the active TGF-beta-1. Once activated following release of LAP, TGF-beta-1 acts by binding to TGF-beta receptors (TGFBR1 and TGFBR2), which transduce signal. While expressed by many cells types, TGF-beta-1 only has a very localized range of action within cell environment thanks to fine regulation of its activation by Latency-associated peptide chain (LAP) and 'milieu molecules'. Plays an important role in bone remodeling: acts as a potent stimulator of osteoblastic bone formation, causing chemotaxis, proliferation and differentiation in committed osteoblasts. Can promote either T-helper 17 cells (Th17) or regulatory T-cells (Treg) lineage differentiation in a concentration-dependent manner. At high concentrations, leads to FOXP3-mediated suppression of RORC and down-regulation of IL-17 expression, favoring Treg cell development. At low concentrations in concert with IL-6 and IL-21, leads to expression of the IL-17 and IL-23 receptors, favoring differentiation to Th17 cells. Stimulates sustained production of collagen through the activation of CREB3L1 by regulated intramembrane proteolysis (RIP). Mediates SMAD2/3 activation by inducing its phosphorylation and subsequent translocation to the nucleus. Positively regulates odontoblastic differentiation in dental papilla cells, via promotion of IPO7-mediated translocation of phosphorylated SMAD2 to the nucleus and subsequent transcription of target genes. Can induce epithelial-to-mesenchymal transition (EMT) and cell migration in various cell types. This Ovis aries (Sheep) protein is Transforming growth factor beta-1 proprotein (TGFB1).